Here is a 191-residue protein sequence, read N- to C-terminus: Prostaglandin-H2 D-isomerase (191 aa).

A signal peptide spans 1–24 (MAALHTLWMGLVLLGVLGVLQTRA). Residue Q25 is modified to Pyrrolidone carboxylic acid. N51 carries an N-linked (GlcNAc...) asparagine glycan. The Nucleophile role is filled by C65. An N-linked (GlcNAc...) asparagine glycan is attached at N78. A disulfide bridge connects residues C89 and C186.

It belongs to the calycin superfamily. Lipocalin family. As to quaternary structure, monomer. Post-translationally, N- and O-glycosylated. Both N-glycosylation recognition sites are almost quantitatively occupied by N-glycans of the biantennary complex type, with a considerable proportion of structures bearing a bisecting GlcNAc. N-glycan at Asn-78: dHex1Hex5HexNAc4. Agalacto structure as well as sialylated and nonsialylated oligosaccharides bearing alpha2-3- and/or alpha2-6-linked NeuNAc are present.

It is found in the rough endoplasmic reticulum. The protein localises to the nucleus membrane. Its subcellular location is the golgi apparatus. The protein resides in the cytoplasm. It localises to the perinuclear region. It is found in the secreted. The catalysed reaction is prostaglandin H2 = prostaglandin D2. Functionally, catalyzes the conversion of PGH2 to PGD2, a prostaglandin involved in smooth muscle contraction/relaxation and a potent inhibitor of platelet aggregation. Involved in a variety of CNS functions, such as sedation, NREM sleep and PGE2-induced allodynia, and may have an anti-apoptotic role in oligodendrocytes. Binds small non-substrate lipophilic molecules, including biliverdin, bilirubin, retinal, retinoic acid and thyroid hormone, and may act as a scavenger for harmful hydrophobic molecules and as a secretory retinoid and thyroid hormone transporter. Possibly involved in development and maintenance of the blood-brain, blood-retina, blood-aqueous humor and blood-testis barrier. It is likely to play important roles in both maturation and maintenance of the central nervous system and male reproductive system. Involved in PLA2G3-dependent maturation of mast cells. PLA2G3 is secreted by immature mast cells and acts on nearby fibroblasts upstream to PTDGS to synthesize PGD2, which in turn promotes mast cell maturation and degranulation via PTGDR. The chain is Prostaglandin-H2 D-isomerase (PTGDS) from Felis catus (Cat).